The primary structure comprises 463 residues: Sporulation-specific protein 22 (463 aa).

The signal sequence occupies residues 1–25 (MNRITRKSCLFAIIFASLFVTHALG). 5 LRR repeats span residues 127–147 (SPELIRIQAGNLNKIEGLFQL), 185–206 (IEIIKDIVISDTSLANIENFNK), 207–233 (VQEIDTFNINNNRFLETIHSNVKTIRG), 251–275 (LREVENITIRDTSLVYLPQLTKVKS), and 302–325 (INNVNLIKVNLENLTDIQGGLMIA). Residues asparagine 256, asparagine 314, and asparagine 327 are each glycosylated (N-linked (GlcNAc...) asparagine). The GPI-anchor amidated asparagine moiety is linked to residue asparagine 440. A propeptide spans 441-463 (SANPSMQLDPLLFGTCLVAMLLF) (removed in mature form).

This sequence belongs to the SPS2 family.

Its subcellular location is the cell membrane. Functionally, redundant with SPS2 for the organization of the beta-glucan layer of the spore wall. This chain is Sporulation-specific protein 22 (SPS22), found in Saccharomyces cerevisiae (strain ATCC 204508 / S288c) (Baker's yeast).